Consider the following 522-residue polypeptide: E3 ubiquitin-protein ligase DMA2 (522 aa).

Disordered stretches follow at residues 1–56 and 69–92; these read MYTP…RPAS and QNSQ…PSNS. Over residues 14 to 35 the composition is skewed to low complexity; that stretch reads APTSSMTSNSSSASNANTTSSS. The segment covering 36 to 49 has biased composition (polar residues); sequence GINPRNRASGTPSN. Ser-206 is subject to Phosphoserine. Residues Lys-211, Lys-256, Lys-258, Lys-288, Lys-310, Lys-333, Lys-343, Lys-346, Lys-366, Lys-406, Lys-412, and Lys-423 each participate in a glycyl lysine isopeptide (Lys-Gly) (interchain with G-Cter in ubiquitin) cross-link. In terms of domain architecture, FHA spans 295 to 358; the sequence is LVIGRYTERV…SGTFLNHQRL (64 aa). The RING-type; atypical zinc-finger motif lies at 433–477; sequence CSICLCKIKPCQAIFISPCAHSWHFRCVRRLVMLSYPQFVCPNCR.

It belongs to the DMA1 family. UBC4-dependent autoubiquitination occurs at Lys-211, Lys-258, Lys-288, Lys-310, Lys-333, Lys-343, Lys-346, Lys-366, Lys-406, Lys-412 and Lys-423. UBC13/MMS2-dependent autoubiquitination occurs at Lys-258, Lys-310, Lys-346 and Lys-366. Lys-211, Lys-256, Lys-288, Lys-310, Lys-343, Lys-258, Lys-366 and Lys-412 are also ubiquitinated in trans by DMA1 E3 ligase in association with UBC4.

It localises to the cytoplasm. The catalysed reaction is S-ubiquitinyl-[E2 ubiquitin-conjugating enzyme]-L-cysteine + [acceptor protein]-L-lysine = [E2 ubiquitin-conjugating enzyme]-L-cysteine + N(6)-ubiquitinyl-[acceptor protein]-L-lysine.. In terms of biological role, E3 ubiquitin-protein ligase which functions in cell cycle retarding in conjunction with the UBC4 and UBC13/MMS2 complex, 2 E2 ubiquitin conjugating enzymes. Involved in nutritional control of the cell cycle. Required for proper spindle positioning, likely regulating septin ring deposition at the bud neck. The chain is E3 ubiquitin-protein ligase DMA2 (DMA2) from Saccharomyces cerevisiae (strain YJM789) (Baker's yeast).